The following is a 1503-amino-acid chain: Mitogen-activated protein kinase-binding protein 1 (1503 aa).

WD repeat units follow at residues 89–130, 133–174, 176–214, 271–310, 337–376, 382–431, 472–511, 514–556, 560–601, 609–648, 654–693, and 696–735; these read SSRK…QVAE, EHKY…VVAS, KVSS…TSKV, VELR…FLST, ARYP…KVGK, YHSS…VHGS, DPRV…EMLK, AHDS…SLQQ, EHSS…EGVQ, VRKT…QKKL, GEDG…CVAT, and GHSE…TISM. Disordered regions lie at residues 745-817, 874-917, and 951-1176; these read RQRG…SSPA, LAPS…RLQT, and VYPE…SWAS. A compositionally biased stretch (acidic residues) spans 784-796; it reads KEGEDEGTEEEEL. 2 stretches are compositionally biased toward polar residues: residues 905 to 917 and 957 to 972; these read CVSQ…RLQT and DSPT…QAPT. Residues 1028–1043 are compositionally biased toward acidic residues; sequence DLEEPAEGDEDEEEEG. A compositionally biased stretch (basic and acidic residues) spans 1058-1068; sequence PDQEQFLKQHF. Over residues 1089-1129 the composition is skewed to polar residues; it reads SQSISSRFLLQVQTSPLREPSLSSSGLALTSRPDQVSQVSG. Position 1193 is a phosphoserine (S1193). Disordered stretches follow at residues 1217–1238 and 1369–1391; these read QGSL…SYQN and QGPE…SSRP.

As to quaternary structure, can form homodimers (via C-terminus). Interacts (via C-terminus) with WDR62 (via C-terminus). Interacts with MAPK9. Interacts (via N-terminus) with NOD2; the interaction is enhanced in presence of muramyl dipeptide (MDP). Interacts with MAPK10. In terms of tissue distribution, ubiquitously expressed. Highest expression observed in brain.

The protein localises to the cytoplasm. Its subcellular location is the nucleus. It localises to the cytoskeleton. The protein resides in the spindle pole. Functionally, negative regulator of NOD2 function. It down-regulates NOD2-induced processes such as activation of NF-kappa-B signaling, IL8 secretion and antibacterial response. Involved in JNK signaling pathway. In Mus musculus (Mouse), this protein is Mitogen-activated protein kinase-binding protein 1 (Mapkbp1).